The sequence spans 302 residues: Small ribosomal subunit protein uS3 (302 aa).

Residues 17-86 (IDEFFAEELA…DPQIDVQEVE (70 aa)) enclose the KH type-2 domain. A disordered region spans residues 222–302 (EDADAEDADA…EMDDEDGGAE (81 aa)).

Belongs to the universal ribosomal protein uS3 family. In terms of assembly, part of the 30S ribosomal subunit.

Binds the lower part of the 30S subunit head. This Halobacterium salinarum (strain ATCC 700922 / JCM 11081 / NRC-1) (Halobacterium halobium) protein is Small ribosomal subunit protein uS3.